A 291-amino-acid polypeptide reads, in one-letter code: ATP synthase gamma chain (291 aa).

Belongs to the ATPase gamma chain family. As to quaternary structure, F-type ATPases have 2 components, CF(1) - the catalytic core - and CF(0) - the membrane proton channel. CF(1) has five subunits: alpha(3), beta(3), gamma(1), delta(1), epsilon(1). CF(0) has three main subunits: a, b and c.

It localises to the cell inner membrane. Produces ATP from ADP in the presence of a proton gradient across the membrane. The gamma chain is believed to be important in regulating ATPase activity and the flow of protons through the CF(0) complex. This chain is ATP synthase gamma chain, found in Neisseria meningitidis serogroup B (strain ATCC BAA-335 / MC58).